A 141-amino-acid chain; its full sequence is Vesicle-associated membrane protein 4 (141 aa).

Positions 1–51 (MPPKFKRHLNDDDVTGSVKSERRNLLEDDSDEEEDFFLRGPSGPRFGPRND) are disordered. Residues 1 to 118 (MPPKFKRHLN…MWWRGCKIKA (118 aa)) are Cytoplasmic-facing. A phosphoserine mark is found at Ser17 and Ser30. The 61-residue stretch at 52-112 (KIKHVQNQVD…KQLRRQMWWR (61 aa)) folds into the v-SNARE coiled-coil homology domain. The helical; Anchor for type IV membrane protein transmembrane segment at 119–139 (IMALAAAILLLMIIILIVVKF) threads the bilayer. Topologically, residues 140 to 141 (RT) are vesicular.

This sequence belongs to the synaptobrevin family. Identified in a complex containing STX6, STX12, VAMP4 and VTI1A. Interacts with BAIAP3; this interaction is increased in the presence of calcium. In terms of processing, (Microbial infection) Targeted and hydrolyzed by C.botulinum neurotoxin type X (BoNT/X) which hydrolyzes the 87-Arg-|-Ser-88 bond and probably inhibits neurotransmitter release. It remains unknown whether BoNT/X is ever produced, or what organisms it targets.

The protein resides in the golgi apparatus. Its subcellular location is the trans-Golgi network membrane. Involved in the pathway that functions to remove an inhibitor (probably synaptotagmin-4) of calcium-triggered exocytosis during the maturation of secretory granules. May be a marker for this sorting pathway that is critical for remodeling the secretory response of granule. This is Vesicle-associated membrane protein 4 (Vamp4) from Mus musculus (Mouse).